A 379-amino-acid chain; its full sequence is 8-amino-7-oxononanoate synthase (379 aa).

Residues Arg-27 and Arg-34 each coordinate substrate. Position 114 to 115 (114 to 115) interacts with pyridoxal 5'-phosphate; sequence GY. His-139 contacts substrate. Pyridoxal 5'-phosphate-binding positions include Ser-187, 212 to 215, and 232 to 235; these read DDAH and TLSK. Lys-235 bears the N6-(pyridoxal phosphate)lysine mark. Residue Thr-344 participates in substrate binding.

Belongs to the class-II pyridoxal-phosphate-dependent aminotransferase family. BioF subfamily. As to quaternary structure, homodimer. It depends on pyridoxal 5'-phosphate as a cofactor.

It catalyses the reaction 6-carboxyhexanoyl-[ACP] + L-alanine + H(+) = (8S)-8-amino-7-oxononanoate + holo-[ACP] + CO2. It functions in the pathway cofactor biosynthesis; biotin biosynthesis. Functionally, catalyzes the decarboxylative condensation of pimeloyl-[acyl-carrier protein] and L-alanine to produce 8-amino-7-oxononanoate (AON), [acyl-carrier protein], and carbon dioxide. This is 8-amino-7-oxononanoate synthase from Methylobacterium nodulans (strain LMG 21967 / CNCM I-2342 / ORS 2060).